A 247-amino-acid polypeptide reads, in one-letter code: Adenosine 5'-phosphosulfate reductase (247 aa).

[4Fe-4S] cluster is bound by residues C133, C134, C216, and C219. Positions 222-247 (KPAPGSDPRSGRWAGQAKTECGLHAS) are disordered. C242 serves as the catalytic Nucleophile; cysteine thiosulfonate intermediate.

This sequence belongs to the PAPS reductase family. CysH subfamily. It depends on [4Fe-4S] cluster as a cofactor.

The protein resides in the cytoplasm. The catalysed reaction is [thioredoxin]-disulfide + sulfite + AMP + 2 H(+) = adenosine 5'-phosphosulfate + [thioredoxin]-dithiol. Its pathway is sulfur metabolism; hydrogen sulfide biosynthesis; sulfite from sulfate. Catalyzes the formation of sulfite from adenosine 5'-phosphosulfate (APS) using thioredoxin as an electron donor. This is Adenosine 5'-phosphosulfate reductase from Rhodococcus opacus (strain B4).